Here is a 178-residue protein sequence, read N- to C-terminus: Large ribosomal subunit protein bL25 (178 aa).

The protein belongs to the bacterial ribosomal protein bL25 family. CTC subfamily. As to quaternary structure, part of the 50S ribosomal subunit; part of the 5S rRNA/L5/L18/L25 subcomplex. Contacts the 5S rRNA. Binds to the 5S rRNA independently of L5 and L18.

Functionally, this is one of the proteins that binds to the 5S RNA in the ribosome where it forms part of the central protuberance. The sequence is that of Large ribosomal subunit protein bL25 from Nitratiruptor sp. (strain SB155-2).